A 739-amino-acid chain; its full sequence is Vascular cell adhesion protein 1 (739 aa).

Residues 1 to 24 form the signal peptide; it reads MPVKMVAIFGASTVLWILFAVSQA. 7 consecutive Ig-like C2-type domains span residues 25 to 111, 119 to 212, 223 to 309, 312 to 397, 408 to 506, 514 to 595, and 601 to 682; these read FKIE…IQVD, PEIQ…KERE, PKNT…LIVQ, PFTV…KTIQ, EIEI…QTLY, PTIW…VELI, and KDIQ…RSLT. The Extracellular portion of the chain corresponds to 25-698; that stretch reads FKIEISPEYK…ENNKDYFSPE (674 aa). 5 disulfides stabilise this stretch: C47-C95, C52-C99, C137-C195, C246-C291, and C335-C383. An N-linked (GlcNAc...) asparagine glycan is attached at N273. 4 N-linked (GlcNAc...) asparagine glycosylation sites follow: N424, N531, N561, and N650. A disulfide bridge connects residues C534 and C579. A helical transmembrane segment spans residues 699 to 720; that stretch reads LLALYFASSLVIPAIGMIIYFA. Residues 721-739 lie on the Cytoplasmic side of the membrane; the sequence is RKANMKGSYSLVEAQKSKV.

In terms of assembly, binds to ECMV-D capsid proteins and acts as a receptor for this virus. Cleaved by the metalloproteinase ADAM17 to generate the soluble form. Post-translationally, sialoglycoprotein. In terms of processing, ubiquitinated by TRIM65 via 'Lys-48'-linked ubiquitination; leading to proteasomal degradation. In terms of tissue distribution, expressed in aortic endothelial cells, with low expression in the descending thoracic aorta and the outer curvature of the aortic arch, where pulsatory shear stress exists, and high in the inner curvature of the aortic arch, where oscillatory shear stress prevails (at protein level). Expressed on inflamed vascular endothelium, as well as on macrophage-like and dendritic cell types in both normal and inflamed tissue.

It is found in the cell membrane. The protein resides in the secreted. Its function is as follows. Cell adhesion glycoprotein predominantly expressed on the surface of endothelial cells that plays an important role in immune surveillance and inflammation. Acts as a major regulator of leukocyte adhesion to the endothelium through interaction with different types of integrins. During inflammatory responses, binds ligands on the surface of activated endothelial cells to initiate the activation of calcium channels and the plasma membrane-associated small GTPase RAC1 leading to leukocyte transendothelial migration. Also serves as a quality-control checkpoint for entry into bone marrow by providing a 'don't-eat-me' stamping in the context of major histocompatibility complex (MHC) class-I presentation. The polypeptide is Vascular cell adhesion protein 1 (Vcam1) (Rattus norvegicus (Rat)).